Here is a 431-residue protein sequence, read N- to C-terminus: Teosinte glume architecture 1 (431 aa).

Disordered stretches follow at residues 18–55 (QDHAAAAPSSGGHAANAAAAGTGTESRPPAPGAAGAPA) and 68–102 (ECEPGAARREREAAAGAAKRPRPAGPGGQQQQQCP). The span at 21–41 (AAAAPSSGGHAANAAAAGTGT) shows a compositional bias: low complexity. The SBP-type zinc finger occupies 101–178 (CPSCAVDGCR…DGHNRRRRKP (78 aa)). Zn(2+)-binding residues include Cys104, Cys109, Cys126, His129, Cys145, Cys148, His152, and Cys164. The segment covering 408-419 (GGGSGGGEGSSD) has biased composition (gly residues). Positions 408–431 (GGGSGGGEGSSDGGTSSSMPFSWQ) are disordered.

As to quaternary structure, monomer and homodimer. In terms of tissue distribution, strongly expressed in immature ears and weakly in husks. Found in the inflorescence meristem of the developing ear, in the spikelet pair primordia, the glume primordia, the cupule forming region and other floral organs. Not detected in other tissues.

SBP transcriptional regulator probably involved in the domestication of maize. Acts as a transcriptional repressor binding to a 5'-GTAC-3' motif. May repress the growth of lateral branches in length and numbers. The protein is Teosinte glume architecture 1 of Zea mays (Maize).